The chain runs to 124 residues: Urease subunit beta (124 aa).

It belongs to the urease beta subunit family. Heterotrimer of UreA (gamma), UreB (beta) and UreC (alpha) subunits. Three heterotrimers associate to form the active enzyme.

The protein localises to the cytoplasm. The enzyme catalyses urea + 2 H2O + H(+) = hydrogencarbonate + 2 NH4(+). It participates in nitrogen metabolism; urea degradation; CO(2) and NH(3) from urea (urease route): step 1/1. The chain is Urease subunit beta from Bacillus subtilis (strain 168).